The chain runs to 407 residues: Inhibin beta B chain (407 aa).

Residues 1–28 (MDGLPGRALGAACLLLLAAGWLGPEAWG) form the signal peptide. The segment at 26–62 (AWGSPTPPPTPAAPPPPPPPGSPGGSQDTCTSCGGFR) is disordered. The propeptide occupies 29 to 292 (SPTPPPTPAA…GDSRHRIRKR (264 aa)). Residues 30 to 47 (PTPPPTPAAPPPPPPPGS) are compositionally biased toward pro residues. N-linked (GlcNAc...) asparagine glycosylation is present at N93. 4 disulfides stabilise this stretch: C296–C304, C303–C372, C332–C404, and C336–C406.

The protein belongs to the TGF-beta family. As to quaternary structure, dimeric, linked by one or more disulfide bonds. Inhibin B is a dimer of alpha and beta-B. Activin B is a homodimer of beta-B. Activin AB is a dimer of beta-A and beta-B. Interacts with FST and FSTL3. Activin B interacts with BMPR2.

Its subcellular location is the secreted. In terms of biological role, inhibins and activins inhibit and activate, respectively, the secretion of follitropin by the pituitary gland. Inhibins/activins are involved in regulating a number of diverse functions such as hypothalamic and pituitary hormone secretion, gonadal hormone secretion, germ cell development and maturation, erythroid differentiation, insulin secretion, nerve cell survival, embryonic axial development or bone growth, depending on their subunit composition. Inhibins appear to oppose the functions of activins. Activin B is a dimer of alpha and beta-B that plays a role in several essential biological processes including embryonic development, stem cell maintenance and differentiation, haematopoiesis, cell proliferation and wound healing. Signals through type I receptor ACVR1C, abundantly expressed in pancreatic beta cells, and type II receptors like ACVR2A or BMPR2. Upon ligand binding, these receptors phosphorylate intracellular signaling mediators SMAD2 and SMAD3, which form a complex with SMAD4, translocate to the nucleus, and regulate gene expression. Plays a crucial role in the induction of hepcidin by inflammation through activation of ACVR1C and subsequent phosphorylation of SMAD1/5/8. Regulates adipocyte lipid metabolism by decreasing non-esterified fatty acids and glycerol release and increases intracellular triglyceride content. Stimulates wound healing by promoting cell migration and hair follicle regeneration through the JNK and ERK signaling pathways downstream of RHOA. Functionally, inhibin B is a dimer of alpha and beta-B that plays a crucial role in the regulation of the reproductive system by inhibiting the secretion of follicle-stimulating hormone (FSH) from the anterior pituitary gland. Thereby, maintains reproductive homeostasis in both males and females. Acts as a more potent suppressor of FSH release than inhibin A. Functions as competitive receptor antagonist binding activin type II receptors with high affinity in the presence of the TGF-beta type III coreceptor/TGFBR3L. The sequence is that of Inhibin beta B chain (INHBB) from Homo sapiens (Human).